A 497-amino-acid chain; its full sequence is ADP-dependent glucokinase (497 aa).

The first 22 residues, 1-22, serve as a signal peptide directing secretion; the sequence is MALWRGSAYAGFLALAVGCVFL. In terms of domain architecture, ADPK spans 52-497; the sequence is SPEGRLAAAW…LFYSEVHPHY (446 aa). Residues Glu297, Glu328, and Asp481 each coordinate Mg(2+). The active-site Proton acceptor is Asp481.

It belongs to the ADP-dependent glucokinase family. As to quaternary structure, monomer. It depends on Mg(2+) as a cofactor.

It localises to the secreted. It catalyses the reaction D-glucose + ADP = D-glucose 6-phosphate + AMP + H(+). The protein operates within carbohydrate degradation; glycolysis. Functionally, catalyzes the phosphorylation of D-glucose to D-glucose 6-phosphate using ADP as the phosphate donor. GDP and CDP can replace ADP, but with reduced efficiency. In Homo sapiens (Human), this protein is ADP-dependent glucokinase (ADPGK).